The sequence spans 450 residues: Phosphoglucosamine mutase (450 aa).

Ser101 acts as the Phosphoserine intermediate in catalysis. Mg(2+) is bound by residues Ser101, Asp241, Asp243, and Asp245. Ser101 is modified (phosphoserine).

The protein belongs to the phosphohexose mutase family. The cofactor is Mg(2+). Post-translationally, activated by phosphorylation.

It carries out the reaction alpha-D-glucosamine 1-phosphate = D-glucosamine 6-phosphate. Catalyzes the conversion of glucosamine-6-phosphate to glucosamine-1-phosphate. In Listeria monocytogenes serovar 1/2a (strain ATCC BAA-679 / EGD-e), this protein is Phosphoglucosamine mutase.